Consider the following 89-residue polypeptide: Small ribosomal subunit protein uS17 (89 aa).

Belongs to the universal ribosomal protein uS17 family. Part of the 30S ribosomal subunit.

Its function is as follows. One of the primary rRNA binding proteins, it binds specifically to the 5'-end of 16S ribosomal RNA. The protein is Small ribosomal subunit protein uS17 of Coxiella burnetii (strain RSA 493 / Nine Mile phase I).